Here is a 392-residue protein sequence, read N- to C-terminus: Formate-dependent phosphoribosylglycinamide formyltransferase (392 aa).

Residues 22 to 23 (EL) and Glu82 each bind N(1)-(5-phospho-beta-D-ribosyl)glycinamide. Residues Arg114, Lys155, 160-165 (SSGKGQ), 195-198 (EGVV), and Glu203 contribute to the ATP site. Residues 119–308 (RLAAEELQLP…EFALHVRAFL (190 aa)) form the ATP-grasp domain. Positions 267 and 279 each coordinate Mg(2+). N(1)-(5-phospho-beta-D-ribosyl)glycinamide contacts are provided by residues Asp286, Lys355, and 362–363 (RR).

This sequence belongs to the PurK/PurT family. In terms of assembly, homodimer.

It carries out the reaction N(1)-(5-phospho-beta-D-ribosyl)glycinamide + formate + ATP = N(2)-formyl-N(1)-(5-phospho-beta-D-ribosyl)glycinamide + ADP + phosphate + H(+). It participates in purine metabolism; IMP biosynthesis via de novo pathway; N(2)-formyl-N(1)-(5-phospho-D-ribosyl)glycinamide from N(1)-(5-phospho-D-ribosyl)glycinamide (formate route): step 1/1. Functionally, involved in the de novo purine biosynthesis. Catalyzes the transfer of formate to 5-phospho-ribosyl-glycinamide (GAR), producing 5-phospho-ribosyl-N-formylglycinamide (FGAR). Formate is provided by PurU via hydrolysis of 10-formyl-tetrahydrofolate. The sequence is that of Formate-dependent phosphoribosylglycinamide formyltransferase from Shigella dysenteriae serotype 1 (strain Sd197).